The following is a 376-amino-acid chain: tRNA-specific 2-thiouridylase MnmA (376 aa).

ATP is bound by residues 14–21 (GMSGGVDS) and Met-40. The segment at 100–102 (NPD) is interaction with target base in tRNA. Residue Cys-105 is the Nucleophile of the active site. Cysteines 105 and 202 form a disulfide. ATP is bound at residue Gly-129. An interaction with tRNA region spans residues 152–154 (KDQ). The active-site Cysteine persulfide intermediate is Cys-202. The tract at residues 315 to 316 (RY) is interaction with tRNA.

This sequence belongs to the MnmA/TRMU family.

Its subcellular location is the cytoplasm. It carries out the reaction S-sulfanyl-L-cysteinyl-[protein] + uridine(34) in tRNA + AH2 + ATP = 2-thiouridine(34) in tRNA + L-cysteinyl-[protein] + A + AMP + diphosphate + H(+). In terms of biological role, catalyzes the 2-thiolation of uridine at the wobble position (U34) of tRNA, leading to the formation of s(2)U34. In Lactococcus lactis subsp. cremoris (strain MG1363), this protein is tRNA-specific 2-thiouridylase MnmA.